Here is a 103-residue protein sequence, read N- to C-terminus: Nucleoid-associated protein Cgl0243/cg0297 (103 aa).

This sequence belongs to the YbaB/EbfC family. In terms of assembly, homodimer.

The protein resides in the cytoplasm. The protein localises to the nucleoid. In terms of biological role, binds to DNA and alters its conformation. May be involved in regulation of gene expression, nucleoid organization and DNA protection. The polypeptide is Nucleoid-associated protein Cgl0243/cg0297 (Corynebacterium glutamicum (strain ATCC 13032 / DSM 20300 / JCM 1318 / BCRC 11384 / CCUG 27702 / LMG 3730 / NBRC 12168 / NCIMB 10025 / NRRL B-2784 / 534)).